We begin with the raw amino-acid sequence, 323 residues long: Lipoyl synthase (323 aa).

Positions 61, 66, 72, 87, 91, 94, and 300 each coordinate [4Fe-4S] cluster. The region spanning 73-289 (WDKKHATFMI…ETVAYSKGFL (217 aa)) is the Radical SAM core domain.

The protein belongs to the radical SAM superfamily. Lipoyl synthase family. [4Fe-4S] cluster is required as a cofactor.

Its subcellular location is the cytoplasm. It catalyses the reaction [[Fe-S] cluster scaffold protein carrying a second [4Fe-4S](2+) cluster] + N(6)-octanoyl-L-lysyl-[protein] + 2 oxidized [2Fe-2S]-[ferredoxin] + 2 S-adenosyl-L-methionine + 4 H(+) = [[Fe-S] cluster scaffold protein] + N(6)-[(R)-dihydrolipoyl]-L-lysyl-[protein] + 4 Fe(3+) + 2 hydrogen sulfide + 2 5'-deoxyadenosine + 2 L-methionine + 2 reduced [2Fe-2S]-[ferredoxin]. Its pathway is protein modification; protein lipoylation via endogenous pathway; protein N(6)-(lipoyl)lysine from octanoyl-[acyl-carrier-protein]: step 2/2. In terms of biological role, catalyzes the radical-mediated insertion of two sulfur atoms into the C-6 and C-8 positions of the octanoyl moiety bound to the lipoyl domains of lipoate-dependent enzymes, thereby converting the octanoylated domains into lipoylated derivatives. This is Lipoyl synthase from Rhizobium etli (strain ATCC 51251 / DSM 11541 / JCM 21823 / NBRC 15573 / CFN 42).